The following is a 90-amino-acid chain: U7-theraphotoxin-Hhn1a 4 (90 aa).

The N-terminal stretch at 1–19 (MKTAIFTVVLALAVFAVLS) is a signal peptide. Residues 20–50 (FGWEANEEALSEEFTELIHEKEAASETEARE) constitute a propeptide that is removed on maturation. Disulfide bonds link cysteine 51–cysteine 65, cysteine 58–cysteine 70, and cysteine 64–cysteine 81.

The protein belongs to the neurotoxin 10 (Hwtx-1) family. 13 (Hntx-13) subfamily. In terms of tissue distribution, expressed by the venom gland.

It localises to the secreted. Functionally, ion channel inhibitor. The polypeptide is U7-theraphotoxin-Hhn1a 4 (Cyriopagopus hainanus (Chinese bird spider)).